A 450-amino-acid polypeptide reads, in one-letter code: Glucose-6-phosphate isomerase (450 aa).

Thr39 carries the phosphothreonine modification. Glu291 (proton donor) is an active-site residue. Residues His312 and Lys426 contribute to the active site.

Belongs to the GPI family.

The protein localises to the cytoplasm. It carries out the reaction alpha-D-glucose 6-phosphate = beta-D-fructose 6-phosphate. It participates in carbohydrate biosynthesis; gluconeogenesis. The protein operates within carbohydrate degradation; glycolysis; D-glyceraldehyde 3-phosphate and glycerone phosphate from D-glucose: step 2/4. Catalyzes the reversible isomerization of glucose-6-phosphate to fructose-6-phosphate. This Bacillus cytotoxicus (strain DSM 22905 / CIP 110041 / 391-98 / NVH 391-98) protein is Glucose-6-phosphate isomerase.